We begin with the raw amino-acid sequence, 272 residues long: Dermonecrotic toxin SpeSicTox-betaIB1b (272 aa).

The active site involves histidine 5. Mg(2+)-binding residues include glutamate 25 and aspartate 27. The active-site Nucleophile is histidine 41. 2 disulfides stabilise this stretch: cysteine 45–cysteine 51 and cysteine 47–cysteine 191. Position 85 (aspartate 85) interacts with Mg(2+).

It belongs to the arthropod phospholipase D family. Class II subfamily. It depends on Mg(2+) as a cofactor. Expressed by the venom gland.

The protein localises to the secreted. The catalysed reaction is an N-(acyl)-sphingosylphosphocholine = an N-(acyl)-sphingosyl-1,3-cyclic phosphate + choline. It carries out the reaction an N-(acyl)-sphingosylphosphoethanolamine = an N-(acyl)-sphingosyl-1,3-cyclic phosphate + ethanolamine. The enzyme catalyses a 1-acyl-sn-glycero-3-phosphocholine = a 1-acyl-sn-glycero-2,3-cyclic phosphate + choline. It catalyses the reaction a 1-acyl-sn-glycero-3-phosphoethanolamine = a 1-acyl-sn-glycero-2,3-cyclic phosphate + ethanolamine. Dermonecrotic toxins cleave the phosphodiester linkage between the phosphate and headgroup of certain phospholipids (sphingolipid and lysolipid substrates), forming an alcohol (often choline) and a cyclic phosphate. This toxin acts on sphingomyelin (SM). It may also act on ceramide phosphoethanolamine (CPE), lysophosphatidylcholine (LPC) and lysophosphatidylethanolamine (LPE), but not on lysophosphatidylserine (LPS), and lysophosphatidylglycerol (LPG). It acts by transphosphatidylation, releasing exclusively cyclic phosphate products as second products. Induces dermonecrosis, hemolysis, increased vascular permeability, edema, inflammatory response, and platelet aggregation. In Sicarius peruensis (Six-eyed sand spider), this protein is Dermonecrotic toxin SpeSicTox-betaIB1b.